The primary structure comprises 207 residues: Ras-related protein Rab-7a (207 aa).

Thr2 bears the N-acetylthreonine mark. Residues Ser17, Gly18, Val19, Gly20, Lys21, Thr22, Ser23, Ser34, Asn35, Tyr37, and Thr40 each contribute to the GTP site. Thr22 is a binding site for Mg(2+). The Switch 1 signature appears at 28-41; that stretch reads YVNKKFSNQYKATI. Residues Thr40 and Asp63 each coordinate Mg(2+). GTP is bound at residue Gly66. A Switch 2 motif is present at residues 67–82; the sequence is QERFQSLGVAFYRGAD. Position 72 is a phosphoserine (Ser72). Positions 125, 126, 128, 156, and 157 each coordinate GTP. Glycyl lysine isopeptide (Lys-Gly) (interchain with G-Cter in ubiquitin) cross-links involve residues Lys191 and Lys194. 2 S-geranylgeranyl cysteine lipidation sites follow: Cys205 and Cys207. Cys207 carries the cysteine methyl ester modification.

The protein belongs to the small GTPase superfamily. Rab family. As to quaternary structure, interacts with NTRK1/TRKA. Interacts with RILP. Interacts with PSMA7. Interacts with RNF115. Interacts with FYCO1. Interacts with the PIK3C3/VPS34-PIK3R4 complex. The GTP-bound form interacts with OSBPL1A. The GTP-bound form interacts with RAC1. Interacts with CLN3. Interacts with CHM, the substrate-binding subunit of the Rab geranylgeranyltransferase complex. Interacts with C9orf72. Does not interact with HPS4 and the BLOC-3 complex (heterodimer of HPS1 and HPS4). Interacts with CLN5. Interacts with PLEKHM1 (via N- and C-terminus). Interacts with PRPH; the interaction is direct. Interacts with VPS13A. The GDP-bound form interacts with RIMOC1. Interacts with the MON1A-CCZ1B complex and this interaction is enhanced in the presence of RIMOC1. Interacts with VPS39 and VPS41. Forms a ternary complex with LAMP2 and RUFY4; the interaction with LAMP2 is mediated by RUFY4 (via RUN and coiled coil domains). It depends on Mg(2+) as a cofactor. Post-translationally, deubiquitination at Lys-191 and Lys-194 by USP32. Phosphorylated at Ser-72 by LRRK1; phosphorylation is dependent on protein kinase C (PKC) activation of LRRK1. In terms of processing, prenylated. Prenylation is required for association with cellular membranes.

The protein resides in the cytoplasmic vesicle. The protein localises to the phagosome membrane. It is found in the late endosome membrane. It localises to the lysosome membrane. Its subcellular location is the melanosome membrane. The protein resides in the autophagosome membrane. The protein localises to the lipid droplet. It is found in the endosome membrane. It localises to the mitochondrion membrane. It catalyses the reaction GTP + H2O = GDP + phosphate + H(+). With respect to regulation, regulated by guanine nucleotide exchange factors (GEFs) which promote the exchange of bound GDP for free GTP. Regulated by GTPase activating proteins (GAPs) which increase the GTP hydrolysis activity. Inhibited by GDP dissociation inhibitors (GDIs). Functionally, the small GTPases Rab are key regulators of intracellular membrane trafficking, from the formation of transport vesicles to their fusion with membranes. Rabs cycle between an inactive GDP-bound form and an active GTP-bound form that is able to recruit to membranes different sets of downstream effectors directly responsible for vesicle formation, movement, tethering and fusion. In its active state, RAB7A binds to a variety of effector proteins playing a key role in the regulation of endo-lysosomal trafficking. Governs early-to-late endosomal maturation, microtubule minus-end as well as plus-end directed endosomal migration and positioning, and endosome-lysosome transport through different protein-protein interaction cascades. Also plays a central role in growth-factor-mediated cell signaling, nutrient-transporter-mediated nutrient uptake, neurotrophin transport in the axons of neurons and lipid metabolism. Also involved in regulation of some specialized endosomal membrane trafficking, such as maturation of melanosomes, pathogen-induced phagosomes (or vacuoles) and autophagosomes. Plays a role in the maturation and acidification of phagosomes that engulf pathogens, such as S.aureus and Mycobacteria. Plays a role in the fusion of phagosomes with lysosomes. In concert with RAC1, plays a role in regulating the formation of RBs (ruffled borders) in osteoclasts. Controls the endosomal trafficking and neurite outgrowth signaling of NTRK1/TRKA. Regulates the endocytic trafficking of the EGF-EGFR complex by regulating its lysosomal degradation. Involved in the ADRB2-stimulated lipolysis through lipophagy, a cytosolic lipase-independent autophagic pathway. Required for the exosomal release of SDCBP, CD63 and syndecan. Required for vesicular trafficking and cell surface expression of ACE2. May play a role in PRPH neuronal intermediate filament assembly. This Bos taurus (Bovine) protein is Ras-related protein Rab-7a (RAB7A).